The following is a 373-amino-acid chain: Transaminase AMT5-2 (373 aa).

Arg-92 serves as a coordination point for pyridoxal 5'-phosphate. Position 196 is an N6-(pyridoxal phosphate)lysine (Lys-196). Glu-232 contacts pyridoxal 5'-phosphate.

It belongs to the class-IV pyridoxal-phosphate-dependent aminotransferase family. Pyridoxal 5'-phosphate serves as cofactor.

Its pathway is mycotoxin biosynthesis. In terms of biological role, transaminase; part of the gene clusters that mediate the biosynthesis of AM-toxins, host-selective toxins (HSTs) causing Alternaria blotch on apple, a worldwide distributed disease. AM-toxins are cyclic depsipeptides containing the 3 residues 2-hydroxy-isovaleric acid (2-HIV), dehydroalanine, L-alanine which are common for all 3 AM-toxins I to III. The fourth precursor is L-alpha-amino-methoxyphenyl-valeric acid (L-Amv) for AM-toxin I, L-alpha-amino-phenyl-valeric acid (L-Apv) for AM-toxin II, and L-alpha-amino-hydroxyphenyl-valeric acid (L-Ahv) for AM-toxin III. AM-toxins have two target sites for affecting susceptible apple cells; they cause invagination of the plasma membrane and electrolyte loss and chloroplast disorganization. The non-ribosomal peptide synthetase AMT1 contains 4 catalytic modules and is responsible for activation of each residue in AM-toxin. The aldo-keto reductase AMT2 catalyzes the conversion of 2-keto-isovaleric acid (2-KIV) to 2-hydroxy-isovaleric acid (2-HIV), one of the precursor residues incorporated by AMT1 during AM-toxin biosynthesis, by reduction of its ketone to an alcohol. The cytochrome P450 monooxygenase AMT3 and the thioesterase AMT4 are also important for AM-toxin production, but their exact function within the AM-toxin biosynthesis are not known yet. Up to 21 proteins (including AMT1 to AMT4) are predicted to be involved in AM-toxin biosynthesis since their expression ishighly up-regulated in AM-toxin-producing cultures. The protein is Transaminase AMT5-2 of Alternaria alternata (Alternaria rot fungus).